A 335-amino-acid chain; its full sequence is Teichoic acids export ATP-binding protein TagH (335 aa).

The ABC transporter domain occupies 26–246 (IKGLFMPKSQ…YDEFVKWFNK (221 aa)). 60 to 67 (GINGSGKS) provides a ligand contact to ATP.

Belongs to the ABC transporter superfamily. Teichoic acids exporter (TC 3.A.1.104.1) family. As to quaternary structure, the complex is composed of two ATP-binding proteins (TagH) and two transmembrane proteins (TagG).

The protein localises to the cell membrane. It carries out the reaction ATP + H2O + teichoic acidSide 1 = ADP + phosphate + teichoic acidSide 2.. Functionally, part of the ABC transporter complex TagGH involved in teichoic acids export. Responsible for energy coupling to the transport system. This Listeria monocytogenes serotype 4b (strain F2365) protein is Teichoic acids export ATP-binding protein TagH.